The sequence spans 68 residues: Protein transport protein Sec61 subunit gamma (68 aa).

Residues 1–32 (MDQVMQFVEPSRQFVKDSIRLVKRCTKPDRKE) are Cytoplasmic-facing. Residues 33-61 (FQKIAMATAIGFAIMGFIGFFVKLIHIPI) traverse the membrane as a helical segment. The Extracellular portion of the chain corresponds to 62-68 (NNIIVGS).

Belongs to the SecE/SEC61-gamma family. In terms of assembly, the SEC61 channel-forming translocon complex consists of channel-forming core components SEC61A1, SEC61B and SEC61G and different auxiliary components such as SEC62 and SEC63. The SEC61 channel associates with the multi-pass translocon (MPT) complex.

Its subcellular location is the endoplasmic reticulum membrane. Component of SEC61 channel-forming translocon complex that mediates transport of signal peptide-containing precursor polypeptides across the endoplasmic reticulum (ER). Forms a ribosome receptor and a gated pore in the ER membrane, both functions required for cotranslational translocation of nascent polypeptides. The SEC61 channel is also involved in ER membrane insertion of transmembrane proteins: it mediates membrane insertion of the first few transmembrane segments of proteins, while insertion of subsequent transmembrane regions of multi-pass membrane proteins is mediated by the multi-pass translocon (MPT) complex. This chain is Protein transport protein Sec61 subunit gamma (sec61g), found in Xenopus laevis (African clawed frog).